Here is a 454-residue protein sequence, read N- to C-terminus: tRNA modification GTPase MnmE (454 aa).

3 residues coordinate (6S)-5-formyl-5,6,7,8-tetrahydrofolate: Arg-23, Glu-80, and Lys-120. The region spanning 216 to 377 is the TrmE-type G domain; it reads GMKVVIAGRP…LRNHLKQSMG (162 aa). Residue Asn-226 coordinates K(+). Residues 226–231, 245–251, 270–273, 335–338, and 358–360 each bind GTP; these read NAGKSS, TDIAGTT, DTAG, NKAD, and SAR. Residue Ser-230 participates in Mg(2+) binding. K(+) contacts are provided by Thr-245, Ile-247, and Thr-250. Mg(2+) is bound at residue Thr-251. Lys-454 lines the (6S)-5-formyl-5,6,7,8-tetrahydrofolate pocket.

Belongs to the TRAFAC class TrmE-Era-EngA-EngB-Septin-like GTPase superfamily. TrmE GTPase family. As to quaternary structure, homodimer. Heterotetramer of two MnmE and two MnmG subunits. The cofactor is K(+).

The protein resides in the cytoplasm. Exhibits a very high intrinsic GTPase hydrolysis rate. Involved in the addition of a carboxymethylaminomethyl (cmnm) group at the wobble position (U34) of certain tRNAs, forming tRNA-cmnm(5)s(2)U34. This Shigella sonnei (strain Ss046) protein is tRNA modification GTPase MnmE.